We begin with the raw amino-acid sequence, 102 residues long: 10 kDa heat shock protein, mitochondrial (102 aa).

Alanine 2 carries the post-translational modification N-acetylalanine. Lysine 8 carries the N6-acetyllysine modification. N6-succinyllysine is present on lysine 28. Position 40 is an N6-acetyllysine; alternate (lysine 40). 3 positions are modified to N6-malonyllysine; alternate: lysine 40, lysine 54, and lysine 56. Lysine 40, lysine 54, lysine 56, lysine 66, and lysine 70 each carry N6-succinyllysine; alternate. 3 positions are modified to N6-acetyllysine; alternate: lysine 56, lysine 66, and lysine 70. At threonine 79 the chain carries Phosphothreonine. An N6-acetyllysine; alternate mark is found at lysine 80 and lysine 86. Lysine 80 and lysine 86 each carry N6-succinyllysine; alternate. An N6-acetyllysine modification is found at lysine 99.

This sequence belongs to the GroES chaperonin family. As to quaternary structure, homoheptamer arranged in a ring structure. 2 heptameric Hsp10 rings interact with a Hsp60 tetradecamer in the structure of a back-to-back double heptameric ring to form the symmetrical football complex.

It is found in the mitochondrion matrix. In terms of biological role, co-chaperonin implicated in mitochondrial protein import and macromolecular assembly. Together with Hsp60, facilitates the correct folding of imported proteins. May also prevent misfolding and promote the refolding and proper assembly of unfolded polypeptides generated under stress conditions in the mitochondrial matrix. The functional units of these chaperonins consist of heptameric rings of the large subunit Hsp60, which function as a back-to-back double ring. In a cyclic reaction, Hsp60 ring complexes bind one unfolded substrate protein per ring, followed by the binding of ATP and association with 2 heptameric rings of the co-chaperonin Hsp10. This leads to sequestration of the substrate protein in the inner cavity of Hsp60 where, for a certain period of time, it can fold undisturbed by other cell components. Synchronous hydrolysis of ATP in all Hsp60 subunits results in the dissociation of the chaperonin rings and the release of ADP and the folded substrate protein. In Bos taurus (Bovine), this protein is 10 kDa heat shock protein, mitochondrial (HSPE1).